Consider the following 141-residue polypeptide: Hemoglobin subunit alpha-2 (141 aa).

In terms of domain architecture, Globin spans 1-141 (VLSPADKNNV…VSTVLTSKYR (141 aa)). His-58 is a binding site for O2. Position 87 (His-87) interacts with heme b.

It belongs to the globin family. Heterotetramer of two alpha chains and two beta chains. As to expression, red blood cells.

In terms of biological role, involved in oxygen transport from the lung to the various peripheral tissues. This is Hemoglobin subunit alpha-2 from Varecia variegata (Black-and-white ruffed lemur).